Consider the following 137-residue polypeptide: ATP synthase epsilon chain (137 aa).

It belongs to the ATPase epsilon chain family. In terms of assembly, F-type ATPases have 2 components, CF(1) - the catalytic core - and CF(0) - the membrane proton channel. CF(1) has five subunits: alpha(3), beta(3), gamma(1), delta(1), epsilon(1). CF(0) has three main subunits: a, b and c.

It is found in the cell inner membrane. In terms of biological role, produces ATP from ADP in the presence of a proton gradient across the membrane. The chain is ATP synthase epsilon chain from Yersinia pestis bv. Antiqua (strain Antiqua).